The following is a 265-amino-acid chain: tRNA (guanine-N(1)-)-methyltransferase (265 aa).

Residues Gly-119 and 139-144 (IGDYVL) contribute to the S-adenosyl-L-methionine site.

The protein belongs to the RNA methyltransferase TrmD family. Homodimer.

Its subcellular location is the cytoplasm. It catalyses the reaction guanosine(37) in tRNA + S-adenosyl-L-methionine = N(1)-methylguanosine(37) in tRNA + S-adenosyl-L-homocysteine + H(+). Functionally, specifically methylates guanosine-37 in various tRNAs. The protein is tRNA (guanine-N(1)-)-methyltransferase of Alcanivorax borkumensis (strain ATCC 700651 / DSM 11573 / NCIMB 13689 / SK2).